Here is a 739-residue protein sequence, read N- to C-terminus: Phosphoribosylformylglycinamidine synthase subunit PurL (739 aa).

The active site involves histidine 53. Residues tyrosine 56 and lysine 95 each contribute to the ATP site. Glutamate 97 contributes to the Mg(2+) binding site. Substrate-binding positions include 98-101 and arginine 120; that span reads SHNH. The Proton acceptor role is filled by histidine 99. A Mg(2+)-binding site is contributed by aspartate 121. Substrate is bound at residue glutamine 244. A Mg(2+)-binding site is contributed by aspartate 274. 318–320 is a binding site for substrate; sequence ESQ. Positions 501 and 538 each coordinate ATP. Residue asparagine 539 participates in Mg(2+) binding. Serine 541 serves as a coordination point for substrate.

This sequence belongs to the FGAMS family. Monomer. Part of the FGAM synthase complex composed of 1 PurL, 1 PurQ and 2 PurS subunits.

It is found in the cytoplasm. It catalyses the reaction N(2)-formyl-N(1)-(5-phospho-beta-D-ribosyl)glycinamide + L-glutamine + ATP + H2O = 2-formamido-N(1)-(5-O-phospho-beta-D-ribosyl)acetamidine + L-glutamate + ADP + phosphate + H(+). The protein operates within purine metabolism; IMP biosynthesis via de novo pathway; 5-amino-1-(5-phospho-D-ribosyl)imidazole from N(2)-formyl-N(1)-(5-phospho-D-ribosyl)glycinamide: step 1/2. Part of the phosphoribosylformylglycinamidine synthase complex involved in the purines biosynthetic pathway. Catalyzes the ATP-dependent conversion of formylglycinamide ribonucleotide (FGAR) and glutamine to yield formylglycinamidine ribonucleotide (FGAM) and glutamate. The FGAM synthase complex is composed of three subunits. PurQ produces an ammonia molecule by converting glutamine to glutamate. PurL transfers the ammonia molecule to FGAR to form FGAM in an ATP-dependent manner. PurS interacts with PurQ and PurL and is thought to assist in the transfer of the ammonia molecule from PurQ to PurL. The protein is Phosphoribosylformylglycinamidine synthase subunit PurL of Listeria monocytogenes serotype 4b (strain CLIP80459).